A 433-amino-acid chain; its full sequence is ATP-dependent protease ATPase subunit HslU (433 aa).

ATP-binding positions include V18, G60 to E65, D246, E311, and R383.

This sequence belongs to the ClpX chaperone family. HslU subfamily. As to quaternary structure, a double ring-shaped homohexamer of HslV is capped on each side by a ring-shaped HslU homohexamer. The assembly of the HslU/HslV complex is dependent on binding of ATP.

It is found in the cytoplasm. Functionally, ATPase subunit of a proteasome-like degradation complex; this subunit has chaperone activity. The binding of ATP and its subsequent hydrolysis by HslU are essential for unfolding of protein substrates subsequently hydrolyzed by HslV. HslU recognizes the N-terminal part of its protein substrates and unfolds these before they are guided to HslV for hydrolysis. The polypeptide is ATP-dependent protease ATPase subunit HslU (Rhodopseudomonas palustris (strain ATCC BAA-98 / CGA009)).